The sequence spans 119 residues: C-X-C motif chemokine 17 (119 aa).

The N-terminal stretch at 1–22 (MKLLASPFLLLLPVMLMSMVFS) is a signal peptide. The tract at residues 75–100 (CPCDHVKGREKKNRHQKHHRKSQRPS) is disordered. 2 disulfide bridges follow: Cys-75–Cys-103 and Cys-77–Cys-110. Over residues 82–98 (GREKKNRHQKHHRKSQR) the composition is skewed to basic residues.

The protein belongs to the intercrine alpha (chemokine CxC) family. Post-translationally, likely to undergo an endoproteolytic process to form a four-cysteine-containing mature peptide with a canonical CXC chemokine scaffold after secretion. As to expression, detected in lung, trachea, lung, tongue thyroid, submaxillary gland, epididymis, and uterus tissues and at a lower level in ovary, prostate and in intestinal tissues.

The protein localises to the secreted. Functionally, chemokine that acts as a chemoattractant for monocytes, macrophages and dendritic cells. Plays a role in angiogenesis and possibly in the development of tumors. Acts as an anti-inflammatory in the stomach. May play a role in the innate defense against infections. Activates the C-X-C chemokine receptor GPR35 to induce a rapid and transient rise in the level of intracellular calcium ions. This is C-X-C motif chemokine 17 (Cxcl17) from Mus musculus (Mouse).